Reading from the N-terminus, the 456-residue chain is High mobility group B protein 6 (456 aa).

Disordered stretches follow at residues 1-42 (MATN…KSAK), 117-142 (SSLT…KRPS), 238-258 (AEQD…PKHP), and 349-389 (MLKK…YFLF). Basic residues predominate over residues 11–21 (KKPRNSRKALK). Residues 138–206 (TKRPSSSYVL…AYLQVIAKEK (69 aa)) constitute a DNA-binding region (HMG box 1). Over residues 240-254 (QDNKKKNKKEKDPLK) the composition is skewed to basic and acidic residues. Residues 255–321 (PKHPVSAFLV…TYLQAMEEYK (67 aa)) constitute a DNA-binding region (HMG box 2). Positions 354-363 (EKTDNLIKKE) are enriched in basic and acidic residues. A DNA-binding region (HMG box 3) is located at residues 379–447 (PKKPASSYFL…AYKKEVEAYN (69 aa)).

The protein resides in the nucleus. This is High mobility group B protein 6 (HMGB6) from Arabidopsis thaliana (Mouse-ear cress).